The sequence spans 81 residues: Sulfur carrier protein TusA (81 aa).

Cysteine 19 serves as the catalytic Cysteine persulfide intermediate.

Belongs to the sulfur carrier protein TusA family.

It localises to the cytoplasm. Its function is as follows. Sulfur carrier protein which probably makes part of a sulfur-relay system. The protein is Sulfur carrier protein TusA of Shewanella oneidensis (strain ATCC 700550 / JCM 31522 / CIP 106686 / LMG 19005 / NCIMB 14063 / MR-1).